A 234-amino-acid chain; its full sequence is Thiamine-phosphate synthase (234 aa).

Residues 65–69 (QYRNK) and N97 contribute to the 4-amino-2-methyl-5-(diphosphooxymethyl)pyrimidine site. Mg(2+)-binding residues include D98 and D117. S136 lines the 4-amino-2-methyl-5-(diphosphooxymethyl)pyrimidine pocket. 2-[(2R,5Z)-2-carboxy-4-methylthiazol-5(2H)-ylidene]ethyl phosphate is bound at residue 163-165 (SHT). K166 serves as a coordination point for 4-amino-2-methyl-5-(diphosphooxymethyl)pyrimidine. 2-[(2R,5Z)-2-carboxy-4-methylthiazol-5(2H)-ylidene]ethyl phosphate-binding positions include G192 and 212-213 (IS).

This sequence belongs to the thiamine-phosphate synthase family. Mg(2+) serves as cofactor.

The catalysed reaction is 2-[(2R,5Z)-2-carboxy-4-methylthiazol-5(2H)-ylidene]ethyl phosphate + 4-amino-2-methyl-5-(diphosphooxymethyl)pyrimidine + 2 H(+) = thiamine phosphate + CO2 + diphosphate. It carries out the reaction 2-(2-carboxy-4-methylthiazol-5-yl)ethyl phosphate + 4-amino-2-methyl-5-(diphosphooxymethyl)pyrimidine + 2 H(+) = thiamine phosphate + CO2 + diphosphate. The enzyme catalyses 4-methyl-5-(2-phosphooxyethyl)-thiazole + 4-amino-2-methyl-5-(diphosphooxymethyl)pyrimidine + H(+) = thiamine phosphate + diphosphate. It participates in cofactor biosynthesis; thiamine diphosphate biosynthesis; thiamine phosphate from 4-amino-2-methyl-5-diphosphomethylpyrimidine and 4-methyl-5-(2-phosphoethyl)-thiazole: step 1/1. Functionally, condenses 4-methyl-5-(beta-hydroxyethyl)thiazole monophosphate (THZ-P) and 2-methyl-4-amino-5-hydroxymethyl pyrimidine pyrophosphate (HMP-PP) to form thiamine monophosphate (TMP). The protein is Thiamine-phosphate synthase of Xylella fastidiosa (strain Temecula1 / ATCC 700964).